We begin with the raw amino-acid sequence, 574 residues long: Glycine--tRNA ligase (574 aa).

Residues arginine 96 and glutamate 162 each coordinate substrate. ATP contacts are provided by residues arginine 194 to glutamate 196, isoleucine 204 to phenylalanine 209, glutamate 327 to cysteine 328, and glycine 450 to arginine 453. Phenylalanine 209–glutamate 213 contributes to the substrate binding site. Substrate is bound at residue glutamate 446–glycine 450.

The protein belongs to the class-II aminoacyl-tRNA synthetase family.

It is found in the cytoplasm. The enzyme catalyses tRNA(Gly) + glycine + ATP = glycyl-tRNA(Gly) + AMP + diphosphate. Functionally, catalyzes the attachment of glycine to tRNA(Gly). This chain is Glycine--tRNA ligase, found in Methanococcus maripaludis (strain DSM 14266 / JCM 13030 / NBRC 101832 / S2 / LL).